Reading from the N-terminus, the 235-residue chain is Coiled-coil domain-containing protein 71L (235 aa).

Over residues 1-13 (MRRSMKRRRRRRP) the composition is skewed to basic residues. Positions 1-30 (MRRSMKRRRRRRPVAPATAARGGDFRAEDG) are disordered. Phosphoserine occurs at positions 52 and 89. The disordered stretch occupies residues 109–167 (PDPPGPPTARGQARRPVPRAAARRRRRGARAAAARRRKPRPPPPPPPPPEESCPAKPVA). Residues 120 to 148 (QARRPVPRAAARRRRRGARAAAARRRKPR) are compositionally biased toward basic residues. The span at 149–159 (PPPPPPPPPEE) shows a compositional bias: pro residues. A Phosphothreonine modification is found at Thr-185. Ser-198 bears the Phosphoserine mark.

The protein is Coiled-coil domain-containing protein 71L (CCDC71L) of Homo sapiens (Human).